The sequence spans 123 residues: Alpha-ketoglutarate dehydrogenase subunit 4, mitochondrial (123 aa).

The N-terminal 8 residues, Met1–Leu8, are a transit peptide targeting the mitochondrion.

The protein belongs to the alpha-ketoglutarate dehydrogenase component 4 family. As to quaternary structure, component of the 2-oxoglutarate dehydrogenase complex (OGDC), also called alpha-ketoglutarate dehydrogenase (KGDH) complex. The copmplex is composed of the catalytic subunits OGDH (2-oxoglutarate dehydrogenase KGD1; also called E1 subunit), DLST (dihydrolipoamide succinyltransferase KGD2; also called E2 subunit) and DLD (dihydrolipoamide dehydrogenase LPD1; also called E3 subunit), and the assembly factor KGD4. Within OGDC, interacts (via N-terminus) with E3 subunit and (via C-terminus) with the complex core formed by E1 and E2 subunits.

Its subcellular location is the mitochondrion. In terms of biological role, molecular adapter that is necessary to a form a stable 2-oxoglutarate dehydrogenase enzyme complex (OGDC). Required for incorporation of the E3 subunit (LPD1) into the E1-E2 core (KGD1-KGD2) of mitochondrial OGDC, and acting as a stability factor for the fully assembled complex. In Saccharomyces cerevisiae (strain ATCC 204508 / S288c) (Baker's yeast), this protein is Alpha-ketoglutarate dehydrogenase subunit 4, mitochondrial.